Here is a 186-residue protein sequence, read N- to C-terminus: Small ribosomal subunit protein eS7 (186 aa).

Belongs to the eukaryotic ribosomal protein eS7 family. As to quaternary structure, component of the small ribosomal subunit. Mature ribosomes consist of a small (40S) and a large (60S) subunit. The 40S subunit contains about 32 different proteins and 1 molecule of RNA (18S). The 60S subunit contains 45 different proteins and 3 molecules of RNA (25S, 5.8S and 5S).

The protein localises to the cytoplasm. Its function is as follows. Component of the ribosome, a large ribonucleoprotein complex responsible for the synthesis of proteins in the cell. The small ribosomal subunit (SSU) binds messenger RNAs (mRNAs) and translates the encoded message by selecting cognate aminoacyl-transfer RNA (tRNA) molecules. The large subunit (LSU) contains the ribosomal catalytic site termed the peptidyl transferase center (PTC), which catalyzes the formation of peptide bonds, thereby polymerizing the amino acids delivered by tRNAs into a polypeptide chain. The nascent polypeptides leave the ribosome through a tunnel in the LSU and interact with protein factors that function in enzymatic processing, targeting, and the membrane insertion of nascent chains at the exit of the ribosomal tunnel. RPS7A is involved in nucleolar processing of pre-18S ribosomal RNA and ribosome assembly. The sequence is that of Small ribosomal subunit protein eS7 (RPS7A) from Candida albicans (strain SC5314 / ATCC MYA-2876) (Yeast).